A 27-amino-acid polypeptide reads, in one-letter code: Caerulein precursor fragment R1 (27 aa).

Expressed by the skin glands.

Its subcellular location is the secreted. Its function is as follows. Antimicrobial peptide. The protein is Caerulein precursor fragment R1 of Xenopus ruwenzoriensis (Uganda clawed frog).